The sequence spans 318 residues: Lysophospholipase D GDPD3 (318 aa).

Residues 1–2 are Cytoplasmic-facing; it reads MS. A helical transmembrane segment spans residues 3-23; it reads LLLYYALPALGSYAMLSIFFL. Over 24-198 the chain is Extracellular; that stretch reads RRPHLLHTPR…KAANPEMPLS (175 aa). The 270-residue stretch at 39-308 folds into the GP-PDE domain; it reads IRLGAHRGGS…DYPTALRHYL (270 aa). The a divalent metal cation site is built by E71, D73, and H86. The chain crosses the membrane as a helical span at residues 199–221; the sequence is FTISRGFWVLLSYYLGLLPFIPI. Residues 222–318 lie on the Cytoplasmic side of the membrane; the sequence is PEKFFFCFLP…DNHGPAARTS (97 aa).

This sequence belongs to the glycerophosphoryl diester phosphodiesterase family. As to expression, widely expressed, with high level in kidney and ovary.

It localises to the membrane. The protein localises to the cytoplasm. The protein resides in the perinuclear region. Its subcellular location is the endoplasmic reticulum. The catalysed reaction is 1-hexadecanoyl-sn-glycero-3-phosphocholine + H2O = 1-hexadecanoyl-sn-glycero-3-phosphate + choline + H(+). The enzyme catalyses 1-hexadecanoyl-sn-glycero-3-phosphocholine + H2O = sn-glycerol 3-phosphocholine + hexadecanoate + H(+). It catalyses the reaction 1-O-(1Z-octadecenyl)-sn-glycero-3-phospho-N-hexadecanoyl-ethanolamine + H2O = 1-O-(1Z-octadecenyl)-sn-glycero-3-phosphate + N-hexadecanoylethanolamine + H(+). It carries out the reaction N-(5Z,8Z,11Z,14Z-eicosatetraenoyl)-1-(9Z-octadecenoyl)-sn-glycero-3-phosphoethanolamine + H2O = N-(5Z,8Z,11Z,14Z-eicosatetraenoyl)-ethanolamine + 1-(9Z-octadecenoyl)-sn-glycero-3-phosphate + H(+). The catalysed reaction is N,1-di-(9Z-octadecenoyl)-sn-glycero-3-phosphoethanolamine + H2O = N-(9Z-octadecenoyl) ethanolamine + 1-(9Z-octadecenoyl)-sn-glycero-3-phosphate + H(+). The enzyme catalyses N-hexadecanoyl-1-(9Z-octadecenoyl)-sn-glycero-3-phosphoethanolamine + H2O = N-hexadecanoylethanolamine + 1-(9Z-octadecenoyl)-sn-glycero-3-phosphate + H(+). It catalyses the reaction 1-O-hexadecyl-sn-glycero-3-phosphocholine + H2O = 1-O-hexadecyl-sn-glycero-3-phosphate + choline + H(+). With respect to regulation, lysophospholipase D activity is stimulated by calcium. Loss of lysophospholipase D activity in presence of EDTA. Hydrolyzes lysoglycerophospholipids to produce lysophosphatidic acid (LPA) and the corresponding amines. Shows a preference for 1-O-alkyl-sn-glycero-3-phosphocholine (lyso-PAF), lysophosphatidylcholine (lyso-PC) and N-acylethanolamine lysophospholipids. Does not display glycerophosphodiester phosphodiesterase activity, since it cannot hydrolyze either glycerophosphoinositol or glycerophosphocholine. This chain is Lysophospholipase D GDPD3, found in Homo sapiens (Human).